A 473-amino-acid polypeptide reads, in one-letter code: Trehalose-6-phosphate synthase (473 aa).

D-glucose 6-phosphate is bound at residue R10. 21 to 22 lines the UDP-alpha-D-glucose pocket; sequence GG. Residues Y76 and D130 each coordinate D-glucose 6-phosphate. R262 and K267 together coordinate UDP-alpha-D-glucose. R300 is a binding site for D-glucose 6-phosphate. UDP-alpha-D-glucose is bound by residues F339 and 365-369; that span reads LVAKE. The tract at residues 454–473 is disordered; it reads TPRSPERQQQNNVATFPKLA.

This sequence belongs to the glycosyltransferase 20 family. In terms of assembly, homotetramer.

The enzyme catalyses D-glucose 6-phosphate + UDP-alpha-D-glucose = alpha,alpha-trehalose 6-phosphate + UDP + H(+). The protein operates within glycan biosynthesis; trehalose biosynthesis. Probably involved in the osmoprotection via the biosynthesis of trehalose. Catalyzes the transfer of glucose from UDP-alpha-D-glucose (UDP-Glc) to D-glucose 6-phosphate (Glc-6-P) to form trehalose-6-phosphate. Acts with retention of the anomeric configuration of the UDP-sugar donor. The sequence is that of Trehalose-6-phosphate synthase from Salmonella choleraesuis (strain SC-B67).